Here is a 2294-residue protein sequence, read N- to C-terminus: Reducing polyketide synthase BOA9 (2294 aa).

Residues 4-409 form the Ketosynthase family 3 (KS3) domain; sequence PEPVAIIGMG…GANATAIVEA (406 aa). Residues 537-853 are malonyl-CoA:ACP transacylase (MAT) domain; sequence IFTGQGAQNA…DYAATLVRGQ (317 aa). Serine 630 (for malonyltransferase activity) is an active-site residue. The interval 930-1067 is N-terminal hotdog fold; it reads HDLLGAILPG…GTVTKKKAVT (138 aa). The interval 930–1104 is dehydratase (DH) domain; the sequence is HDLLGAILPG…LNYGPAFNGL (175 aa). The 307-residue stretch at 930-1236 folds into the PKS/mFAS DH domain; it reads HDLLGAILPG…CTQYSEALDD (307 aa). The active-site Proton acceptor; for dehydratase activity is the histidine 962. The C-terminal hotdog fold stretch occupies residues 1078–1236; sequence QEPKAARTWY…CTQYSEALDD (159 aa). Catalysis depends on aspartate 1142, which acts as the Proton donor; for dehydratase activity. Residues 1618–1908 are enoyl reductase (ER) domain; it reads GIFDTIHFKD…KNSRIGRVVV (291 aa). Residues 1934–2107 form a ketoreductase (KR) domain region; it reads VHTYLLGVLE…LPATTISLTV (174 aa). The 79-residue stretch at 2214–2292 folds into the Carrier domain; sequence LLLPDILEMI…SLAKKIYDIR (79 aa). Serine 2251 is subject to O-(pantetheine 4'-phosphoryl)serine.

Its pathway is polyketide biosynthesis. In terms of biological role, reducing polyketide synthase; part of the gene cluster B that mediates the biosynthesis of botcinic acid and its botcinin derivatives, acetate-derived polyketides that contribute to virulence when combined with the sesquiterpene botrydial. Botcinic acid and its derivatives have been shown to induce chlorosis and necrosis during host plant infection, but also have antifungal activities. Two polyketide synthases, BOA6 and BOA9, are involved in the biosynthesis of botcinins. BOA6 mediates the formation of the per-methylated tetraketide core by condensation of four units of malonyl-CoA with one unit of acetyl-CoA, which would be methylated in activated methylene groups to yield a bicyclic acid intermediate that could then either be converted to botrylactone derivatives or lose the starter acetate unit through a retro-Claisen type C-C bond cleavage to yield botcinin derivatives. The second polyketide synthase, BOA9, is probably required for the biosynthesis of the tetraketide side chain of botcinins. The methyltransferase (MT) domain within BOA6 is probably responsible for the incorporation of four methyl groups. The trans-enoyl reductase BOA5 might take over the enoyl reductase function of BOA6 that misses an ER domain. The monooxygenases BOA2, BOA3 and BOA4 might be involved in further hydroxylations at C4, C5 and C8, whereas BOA7, close to BOA9, could potentially be involved in the hydroxylation at C4 in the side chain of botcinins. This is Reducing polyketide synthase BOA9 from Botryotinia fuckeliana (strain B05.10) (Noble rot fungus).